We begin with the raw amino-acid sequence, 205 residues long: Large ribosomal subunit protein uL3 (205 aa).

It belongs to the universal ribosomal protein uL3 family. In terms of assembly, part of the 50S ribosomal subunit. Forms a cluster with proteins L14 and L19.

Its function is as follows. One of the primary rRNA binding proteins, it binds directly near the 3'-end of the 23S rRNA, where it nucleates assembly of the 50S subunit. The chain is Large ribosomal subunit protein uL3 from Porphyromonas gingivalis (strain ATCC 33277 / DSM 20709 / CIP 103683 / JCM 12257 / NCTC 11834 / 2561).